A 488-amino-acid polypeptide reads, in one-letter code: PPE family protein PPE10 (488 aa).

Disordered stretches follow at residues 207–232 and 443–488; these read NNNW…NIGS and SDAG…LRTE.

This sequence belongs to the mycobacterial PPE family.

Its subcellular location is the secreted. Its function is as follows. Plays a major role in the integrity and stability of the capsule. This is PPE family protein PPE10 from Mycobacterium marinum (strain ATCC BAA-535 / M).